Reading from the N-terminus, the 422-residue chain is Serine--tRNA ligase (422 aa).

226-228 (TSE) lines the L-serine pocket. ATP contacts are provided by residues 257 to 259 (RRE) and V273. E280 serves as a coordination point for L-serine. Position 344-347 (344-347 (ELTS)) interacts with ATP. T379 contributes to the L-serine binding site.

Belongs to the class-II aminoacyl-tRNA synthetase family. Type-1 seryl-tRNA synthetase subfamily. As to quaternary structure, homodimer. The tRNA molecule binds across the dimer.

The protein localises to the cytoplasm. The catalysed reaction is tRNA(Ser) + L-serine + ATP = L-seryl-tRNA(Ser) + AMP + diphosphate + H(+). It carries out the reaction tRNA(Sec) + L-serine + ATP = L-seryl-tRNA(Sec) + AMP + diphosphate + H(+). It functions in the pathway aminoacyl-tRNA biosynthesis; selenocysteinyl-tRNA(Sec) biosynthesis; L-seryl-tRNA(Sec) from L-serine and tRNA(Sec): step 1/1. Its function is as follows. Catalyzes the attachment of serine to tRNA(Ser). Is also able to aminoacylate tRNA(Sec) with serine, to form the misacylated tRNA L-seryl-tRNA(Sec), which will be further converted into selenocysteinyl-tRNA(Sec). The sequence is that of Serine--tRNA ligase from Corynebacterium glutamicum (strain ATCC 13032 / DSM 20300 / JCM 1318 / BCRC 11384 / CCUG 27702 / LMG 3730 / NBRC 12168 / NCIMB 10025 / NRRL B-2784 / 534).